Here is a 339-residue protein sequence, read N- to C-terminus: Dihydroorotase (339 aa).

Zn(2+) contacts are provided by H12 and H14. Residues 14–16 and N40 contribute to the substrate site; that span reads HVR. K94, H133, H167, and D239 together coordinate Zn(2+). Position 94 is an N6-carboxylysine (K94). H133 contributes to the substrate binding site. The active site involves D239. Positions 243 and 255 each coordinate substrate.

The protein belongs to the metallo-dependent hydrolases superfamily. DHOase family. Class II DHOase subfamily. In terms of assembly, homodimer. Requires Zn(2+) as cofactor.

The enzyme catalyses (S)-dihydroorotate + H2O = N-carbamoyl-L-aspartate + H(+). It participates in pyrimidine metabolism; UMP biosynthesis via de novo pathway; (S)-dihydroorotate from bicarbonate: step 3/3. Catalyzes the reversible cyclization of carbamoyl aspartate to dihydroorotate. The polypeptide is Dihydroorotase (Helicobacter acinonychis (strain Sheeba)).